The chain runs to 245 residues: Probable phosphatase YcdX (245 aa).

Zn(2+) is bound by residues His-7, His-9, His-15, His-40, Glu-73, His-101, His-131, Asp-192, and His-194.

This sequence belongs to the PHP family. In terms of assembly, homotrimer. It depends on Zn(2+) as a cofactor.

The polypeptide is Probable phosphatase YcdX (Salmonella arizonae (strain ATCC BAA-731 / CDC346-86 / RSK2980)).